A 394-amino-acid polypeptide reads, in one-letter code: NAD(P)H-quinone oxidoreductase subunit H 2 (394 aa).

It belongs to the complex I 49 kDa subunit family. As to quaternary structure, NDH-1 can be composed of about 15 different subunits; different subcomplexes with different compositions have been identified which probably have different functions.

The protein resides in the cell inner membrane. The catalysed reaction is a plastoquinone + NADH + (n+1) H(+)(in) = a plastoquinol + NAD(+) + n H(+)(out). The enzyme catalyses a plastoquinone + NADPH + (n+1) H(+)(in) = a plastoquinol + NADP(+) + n H(+)(out). Functionally, NDH-1 shuttles electrons from an unknown electron donor, via FMN and iron-sulfur (Fe-S) centers, to quinones in the respiratory and/or the photosynthetic chain. The immediate electron acceptor for the enzyme in this species is believed to be plastoquinone. Couples the redox reaction to proton translocation, and thus conserves the redox energy in a proton gradient. Cyanobacterial NDH-1 also plays a role in inorganic carbon-concentration. The protein is NAD(P)H-quinone oxidoreductase subunit H 2 of Gloeobacter violaceus (strain ATCC 29082 / PCC 7421).